A 357-amino-acid polypeptide reads, in one-letter code: bZIP transcription factor 23 (357 aa).

Positions Pro166 to Pro185 are disordered. The bZIP domain occupies Val275–Arg338. The segment at Arg277–Lys296 is basic motif. Residues Leu303–Leu317 are leucine-zipper.

The protein belongs to the bZIP family. ABI5 subfamily. In terms of tissue distribution, highly expressed in leaves.

The protein localises to the nucleus. Transcriptional activator that mediates abscisic acid (ABA) signaling. Can regulate the expression of a wide spectrum of stress-related genes in response to abiotic stresses through an ABA-dependent regulation pathway. Confers ABA-dependent drought and salinity tolerance. Binds specifically to the ABA-responsive elements (ABRE) in the promoter of target genes to mediate stress-responsive ABA signaling. The protein is bZIP transcription factor 23 of Oryza sativa subsp. japonica (Rice).